A 240-amino-acid polypeptide reads, in one-letter code: NDR1/HIN1-like protein 2 (240 aa).

Residues N57–F77 traverse the membrane as a helical segment. 4 N-linked (GlcNAc...) asparagine glycosylation sites follow: N109, N141, N151, and N223.

Expressed at low levels in roots, rosette leaves, cauline leaves, stems, flowers and siliques.

It localises to the cell membrane. Functionally, may play a role in plant immunity. This Arabidopsis thaliana (Mouse-ear cress) protein is NDR1/HIN1-like protein 2.